The following is a 600-amino-acid chain: MRVTTSFPLGTLRDTPSEAEIISHQLLLKAGYIRRVYSGIYAYMPIMLKVIEKISKIIEIELNSIGCTKLLLPQLHPANLWKKSERWEGYTAGEGIMFNLKDRQGKEFGLAPTHEEVITSIASEIINSYKQLPQCFYQIQTKFRDEIRPRFGLMRSREFIMKDGYSFHSSEKDLASFYEKVGNAYENIFKSCGLETVGVEADSGAIGGASSKEFMVTADAGEDSILFTQSGSYAANIEKAVSIPSQPIPLKNNISGWIETPEQKTILEVCKNNNLDPSQIIKVVVFLAKFEIKSEVPILACIRGDQHINEVKLFNLINKLHSSNLLHLQKIEDIKIIEKNLVNFPLGFIGPDLDNETIKASSNWDKTWTRIIDHSASTLSKFISGANKVNFHKVFQEFSFTSKDYLIEDIRNAKKGDKIKINDNEELKEKKGIEIGHIFQLGQKYSEKLNAKFSDKDGHLKNLWMGCYGIGVTRIAQAAIEQNHDQKGICWPIQISPFEVIIIPTNLKDQIQRDLTEQIYNNFLVNKIDVLLDDREDRAGVKFKDAELIGIPFQIIIGRDSINNEVELICRTNNTKFKISAHKLLETFISESEIMYNKNS.

This sequence belongs to the class-II aminoacyl-tRNA synthetase family. ProS type 1 subfamily. Homodimer.

The protein localises to the cytoplasm. The enzyme catalyses tRNA(Pro) + L-proline + ATP = L-prolyl-tRNA(Pro) + AMP + diphosphate. Catalyzes the attachment of proline to tRNA(Pro) in a two-step reaction: proline is first activated by ATP to form Pro-AMP and then transferred to the acceptor end of tRNA(Pro). As ProRS can inadvertently accommodate and process non-cognate amino acids such as alanine and cysteine, to avoid such errors it has two additional distinct editing activities against alanine. One activity is designated as 'pretransfer' editing and involves the tRNA(Pro)-independent hydrolysis of activated Ala-AMP. The other activity is designated 'posttransfer' editing and involves deacylation of mischarged Ala-tRNA(Pro). The misacylated Cys-tRNA(Pro) is not edited by ProRS. The sequence is that of Proline--tRNA ligase from Prochlorococcus marinus (strain MIT 9312).